The following is a 63-amino-acid chain: Cytochrome c oxidase subunit 7C, mitochondrial (63 aa).

The transit peptide at 1 to 16 (MWGQGVRRFTTSVVRR) directs the protein to the mitochondrion. The Mitochondrial matrix segment spans residues 17 to 33 (SHYEEGPGKNLPFSVEN). Lys-25 carries the N6-acetyllysine; alternate modification. At Lys-25 the chain carries N6-succinyllysine; alternate. The helical transmembrane segment at 34–60 (KWRLLAMMTLYLGSGFAAPFFIVRHQL) threads the bilayer. At 61-63 (LKK) the chain is on the mitochondrial intermembrane side.

This sequence belongs to the cytochrome c oxidase VIIc family. As to quaternary structure, component of the cytochrome c oxidase (complex IV, CIV), a multisubunit enzyme composed of 14 subunits. The complex is composed of a catalytic core of 3 subunits MT-CO1, MT-CO2 and MT-CO3, encoded in the mitochondrial DNA, and 11 supernumerary subunits COX4I, COX5A, COX5B, COX6A, COX6B, COX6C, COX7A, COX7B, COX7C, COX8 and NDUFA4, which are encoded in the nuclear genome. The complex exists as a monomer or a dimer and forms supercomplexes (SCs) in the inner mitochondrial membrane with NADH-ubiquinone oxidoreductase (complex I, CI) and ubiquinol-cytochrome c oxidoreductase (cytochrome b-c1 complex, complex III, CIII), resulting in different assemblies (supercomplex SCI(1)III(2)IV(1) and megacomplex MCI(2)III(2)IV(2)). Interacts with RAB5IF.

The protein localises to the mitochondrion inner membrane. Its pathway is energy metabolism; oxidative phosphorylation. Functionally, component of the cytochrome c oxidase, the last enzyme in the mitochondrial electron transport chain which drives oxidative phosphorylation. The respiratory chain contains 3 multisubunit complexes succinate dehydrogenase (complex II, CII), ubiquinol-cytochrome c oxidoreductase (cytochrome b-c1 complex, complex III, CIII) and cytochrome c oxidase (complex IV, CIV), that cooperate to transfer electrons derived from NADH and succinate to molecular oxygen, creating an electrochemical gradient over the inner membrane that drives transmembrane transport and the ATP synthase. Cytochrome c oxidase is the component of the respiratory chain that catalyzes the reduction of oxygen to water. Electrons originating from reduced cytochrome c in the intermembrane space (IMS) are transferred via the dinuclear copper A center (CU(A)) of subunit 2 and heme A of subunit 1 to the active site in subunit 1, a binuclear center (BNC) formed by heme A3 and copper B (CU(B)). The BNC reduces molecular oxygen to 2 water molecules using 4 electrons from cytochrome c in the IMS and 4 protons from the mitochondrial matrix. The protein is Cytochrome c oxidase subunit 7C, mitochondrial (COX7C) of Carlito syrichta (Philippine tarsier).